The sequence spans 631 residues: Phosphomethylpyrimidine synthase (631 aa).

Substrate contacts are provided by residues Asn-239, Met-268, Tyr-297, His-333, 353–355 (SRG), 394–397 (DGLR), and Glu-433. His-437 serves as a coordination point for Zn(2+). Tyr-460 contributes to the substrate binding site. A Zn(2+)-binding site is contributed by His-501. Residues Cys-581, Cys-584, and Cys-589 each contribute to the [4Fe-4S] cluster site.

The protein belongs to the ThiC family. Homodimer. The cofactor is [4Fe-4S] cluster.

It carries out the reaction 5-amino-1-(5-phospho-beta-D-ribosyl)imidazole + S-adenosyl-L-methionine = 4-amino-2-methyl-5-(phosphooxymethyl)pyrimidine + CO + 5'-deoxyadenosine + formate + L-methionine + 3 H(+). The protein operates within cofactor biosynthesis; thiamine diphosphate biosynthesis. In terms of biological role, catalyzes the synthesis of the hydroxymethylpyrimidine phosphate (HMP-P) moiety of thiamine from aminoimidazole ribotide (AIR) in a radical S-adenosyl-L-methionine (SAM)-dependent reaction. The chain is Phosphomethylpyrimidine synthase from Escherichia coli O139:H28 (strain E24377A / ETEC).